Reading from the N-terminus, the 455-residue chain is Adenylyltransferase and sulfurtransferase MOCS3 (455 aa).

Residues G90, D111, 118–122, K135, and 179–180 each bind ATP; these read SNLAR and DN. Positions 156–236 are interaction with NFS1; sequence AQALTPATAL…RPPPAETVTS (81 aa). Residues C220 and C223 each contribute to the Zn(2+) site. C237 (glycyl thioester intermediate; for adenylyltransferase activity) is an active-site residue. Positions 295 and 298 each coordinate Zn(2+). A disulfide bond links C314 and C322. One can recognise a Rhodanese domain in the interval 345 to 453; it reads SRSPHLLLDV…WAAKIDGTFP (109 aa). Catalysis depends on C410, which acts as the Cysteine persulfide intermediate; for sulfurtransferase activity. At C410 the chain carries Cysteine persulfide.

In the N-terminal section; belongs to the HesA/MoeB/ThiF family. UBA4 subfamily. Interacts with NFS1. Zn(2+) is required as a cofactor.

It localises to the cytoplasm. It is found in the cytosol. It catalyses the reaction [molybdopterin-synthase sulfur-carrier protein]-C-terminal Gly-Gly + ATP + H(+) = [molybdopterin-synthase sulfur-carrier protein]-C-terminal Gly-Gly-AMP + diphosphate. It carries out the reaction [molybdopterin-synthase sulfur-carrier protein]-C-terminal Gly-Gly-AMP + S-sulfanyl-L-cysteinyl-[cysteine desulfurase] + AH2 = [molybdopterin-synthase sulfur-carrier protein]-C-terminal-Gly-aminoethanethioate + L-cysteinyl-[cysteine desulfurase] + A + AMP + 2 H(+). The protein operates within tRNA modification; 5-methoxycarbonylmethyl-2-thiouridine-tRNA biosynthesis. It participates in cofactor biosynthesis; molybdopterin biosynthesis. Functionally, plays a central role in 2-thiolation of mcm(5)S(2)U at tRNA wobble positions of cytosolic tRNA(Lys), tRNA(Glu) and tRNA(Gln). Also essential during biosynthesis of the molybdenum cofactor. Acts by mediating the C-terminal thiocarboxylation of sulfur carriers URM1 and MOCS2A. Its N-terminus first activates URM1 and MOCS2A as acyl-adenylates (-COAMP), then the persulfide sulfur on the catalytic cysteine is transferred to URM1 and MOCS2A to form thiocarboxylation (-COSH) of their C-terminus. The reaction probably involves hydrogen sulfide that is generated from the persulfide intermediate and that acts as a nucleophile towards URM1 and MOCS2A. Subsequently, a transient disulfide bond is formed. Does not use thiosulfate as sulfur donor; NFS1 acting as a sulfur donor for thiocarboxylation reactions. The chain is Adenylyltransferase and sulfurtransferase MOCS3 from Bos taurus (Bovine).